We begin with the raw amino-acid sequence, 485 residues long: MRSALSLKPSNGNAAKSQAVNNKNVIKNAPLGGKLTRQIGTSNLLQQALPSKKIDESPIIKIDAKDSFKVFEDQEPEKENSSENVDATEKDSNVIPAEDNNMIHELERKMEEKSRAEKLKFKFMQTRDNSDITSRFSEPPSEFSVLCDDDDCDKVSVASSTFTTSVRATFSSFHFDENQRKKEFGKEEAVKKIQKKAAKEARDDSMFSSEEFFPDIIKYMLHRQTKNRASHECFDIQSQVNEEMRTILIDWFSDVVKEYNFQKETFHLAVSLVDRALSMFNIDKMRFQLVGTTSMMIAVKYEEIFPPEIEDFALITDNTYRVPDILLMERFLLGKFDFVVAMPTSSWFGTCFAKRMNFTKKMRNTVHYLLELSLIDVHFLRYRPSDIAAAACCFANLQADVESWPQKMVDDTGISTEDFVDVLRDLHRMYLNASTADFKSIFYNYSETAQMEVALLPAPTDKLRSMFPSIFVTAPKSSNDSSSPQ.

The disordered stretch occupies residues 1-24 (MRSALSLKPSNGNAAKSQAVNNKN). The span at 8–24 (KPSNGNAAKSQAVNNKN) shows a compositional bias: polar residues.

This sequence belongs to the cyclin family. Cyclin AB subfamily. Expressed in the cell lineages ABarp, C and E as well as the NSM neuroblasts.

Functionally, involved in the control of the cell cycle after S phase. May bind to and activate cdk-1 and/or cdk-2 to promote cell cycle progression. Necessary for embryogenesis. This is G2/mitotic-specific cyclin-A1 (cya-1) from Caenorhabditis elegans.